The sequence spans 161 residues: Allophycocyanin beta chain (161 aa).

Asparagine 71 is subject to N4-methylasparagine. Cysteine 81 contributes to the (2R,3E)-phycocyanobilin binding site.

The protein belongs to the phycobiliprotein family. As to quaternary structure, heterodimer of an alpha and a beta chain. Post-translationally, contains one covalently linked phycocyanobilin chromophore.

Its subcellular location is the plastid. It is found in the chloroplast thylakoid membrane. Functionally, light-harvesting photosynthetic bile pigment-protein from the phycobiliprotein complex. Allophycocyanin has a maximum absorption at approximately 650 nanometers. In Aglaothamnion neglectum (Red alga), this protein is Allophycocyanin beta chain (apcB).